The primary structure comprises 933 residues: 2-oxoglutarate dehydrogenase E1 component (933 aa).

This sequence belongs to the alpha-ketoglutarate dehydrogenase family. As to quaternary structure, homodimer. Part of the 2-oxoglutarate dehydrogenase (OGDH) complex composed of E1 (2-oxoglutarate dehydrogenase), E2 (dihydrolipoamide succinyltransferase) and E3 (dihydrolipoamide dehydrogenase); the complex contains multiple copies of the three enzymatic components (E1, E2 and E3). Requires thiamine diphosphate as cofactor.

The enzyme catalyses N(6)-[(R)-lipoyl]-L-lysyl-[protein] + 2-oxoglutarate + H(+) = N(6)-[(R)-S(8)-succinyldihydrolipoyl]-L-lysyl-[protein] + CO2. E1 component of the 2-oxoglutarate dehydrogenase (OGDH) complex which catalyzes the decarboxylation of 2-oxoglutarate, the first step in the conversion of 2-oxoglutarate to succinyl-CoA and CO(2). This Staphylococcus saprophyticus subsp. saprophyticus (strain ATCC 15305 / DSM 20229 / NCIMB 8711 / NCTC 7292 / S-41) protein is 2-oxoglutarate dehydrogenase E1 component.